Consider the following 638-residue polypeptide: Protein NSP-INTERACTING KINASE 1 (638 aa).

A signal peptide spans 1–31; that stretch reads MESTIVMMMMITRSFFCFLGFLCLLCSSVHG. At 32 to 248 the chain is on the extracellular side; it reads LLSPKGVNFE…AGGSRNHKMA (217 aa). N-linked (GlcNAc...) asparagine glycosylation is found at Asn92 and Asn103. LRR repeat units follow at residues 104–128, 130–152, 153–175, and 177–200; these read LTNL…IGRL, RLET…VGYL, QSLQ…SLSN, and TQLA…AAKT. Asn162, Asn175, Asn188, Asn219, and Asn231 each carry an N-linked (GlcNAc...) asparagine glycan. A helical transmembrane segment spans residues 249 to 269; sequence IAVGSSVGTVSLIFIAVGLFL. At 270 to 638 the chain is on the cytoplasmic side; that stretch reads WWRQRHNQNT…VQAMELSGPR (369 aa). Thr309 bears the Phosphothreonine mark. The Protein kinase domain maps to 312 to 593; that stretch reads FSSKNLLGKG…EGDGLAEKWE (282 aa). ATP is bound at residue 318-326; it reads LGKGGYGNV. Thr335 is subject to Phosphothreonine. Lys340 contributes to the ATP binding site. Residues Ser393 and Ser396 each carry the phosphoserine modification. An interaction with geminivirus NSP protein region spans residues 422–502; it reads YLHEQCDPKI…DVFGFGILLL (81 aa). The active-site Proton acceptor is Asp435. Thr468, Thr469, and Thr474 each carry phosphothreonine. Tyr482 carries the phosphotyrosine modification. At Ser484 the chain carries Phosphoserine. Phosphothreonine is present on Thr485. Ser489 carries the phosphoserine modification. Thr566 carries the post-translational modification Phosphothreonine.

This sequence belongs to the protein kinase superfamily. Ser/Thr protein kinase family. Oligomer. Interacts with geminivirus nuclear shuttle protein (NSP). Interacts with RPL10A and RPL18B. Autophosphorylated. In terms of tissue distribution, expressed in seedlings, leaves, roots, stems and flowers.

The protein localises to the cell membrane. It catalyses the reaction L-seryl-[protein] + ATP = O-phospho-L-seryl-[protein] + ADP + H(+). The catalysed reaction is L-threonyl-[protein] + ATP = O-phospho-L-threonyl-[protein] + ADP + H(+). Its activity is regulated as follows. Inhibited by the viral nuclear shuttle protein (NSP) that binds to the region required for oligomerization. Its function is as follows. Involved in defense response to geminivirus and begomovirus infection via regulation of the nuclear trafficking of RPL10A. Phosphorylates RPL10A in vitro. Activation of NIK1 down-regulates cytosolic translation. The polypeptide is Protein NSP-INTERACTING KINASE 1 (Arabidopsis thaliana (Mouse-ear cress)).